Here is an 815-residue protein sequence, read N- to C-terminus: Putative transcription factor phnE (815 aa).

The disordered stretch occupies residues 522–577 (PSRRNSDGSAHSSPSSTPSSSSTSSPLPSPASERPPPLDVVTRPSTGTSTPSSPTL). A compositionally biased stretch (low complexity) spans 523-547 (SRRNSDGSAHSSPSSTPSSSSTSSP). Positions 548–559 (LPSPASERPPPL) are enriched in pro residues. Residues 563–577 (TRPSTGTSTPSSPTL) are compositionally biased toward low complexity.

The protein resides in the nucleus. Putative transcription factor that may be involved in the regulation of the expression of the gene cluster that mediates the biosynthesis of phenalenones such as herqueinone, compounds that have been reported to treat tumors, bacterial infections and/or mycoses, and rheumatic diseases. This is Putative transcription factor phnE from Penicillium herquei.